Consider the following 197-residue polypeptide: HTH-type transcriptional regulator BetI (197 aa).

The 61-residue stretch at 8–68 (PIRRQQLIQA…ATMRHLMNAL (61 aa)) folds into the HTH tetR-type domain. Residues 31 to 50 (SIALIARLAGVSNGIISHYF) constitute a DNA-binding region (H-T-H motif).

The protein operates within amine and polyamine biosynthesis; betaine biosynthesis via choline pathway [regulation]. Repressor involved in the biosynthesis of the osmoprotectant glycine betaine. It represses transcription of the choline transporter BetT and the genes of BetAB involved in the synthesis of glycine betaine. The protein is HTH-type transcriptional regulator BetI of Pseudomonas syringae pv. tomato (strain ATCC BAA-871 / DC3000).